The following is a 510-amino-acid chain: MWLTLITGALILLLTWDFGRKRQRVLAFEKSAIPGPISIPILGCGLQALHLGAENIIGWVGEKFDKYGKTFRFWILGESLIYTKDLQYFETILSSTTLLEKGQLYEYLRPFLNDGLLVSTGRKWHARRKIFTHAFHFKVLEHYVEIMDRHSSVMVDNLRKVADGKTAVDMLKYVSLAALDVITEAAMGVQVNAQNDPDFPYIKALKSVVYIQPDRMFRFSRRYNWLFPLAAPLLHRQLLSDIRVMHDFTDKVISERRETVRRAKADGTYRPLSLGDAEIGSKSQMALLDILLQSSINNQPLSDADIREEVDTFMFEGDDTTSSGVSHALYAIARHPEVQQRIFEELQRVLGPDASAPVTQAQLQDLKYLDCVIKETMRLYPPVPAIGRHAQKELEIGDKTIPANTSIYLVLYYAHRDANYFPDPLSFRPERFLEDQEQGHNTFAYVPFSAGPKNCIGQKFAVLEMKVLISKVLRFYELLPLGEELKPMLNFILRSASGINVGLRPRKALR.

Residue Cys-455 coordinates heme.

The protein belongs to the cytochrome P450 family. Heme serves as cofactor.

Its subcellular location is the endoplasmic reticulum membrane. It localises to the microsome membrane. In terms of biological role, may be involved in the metabolism of insect hormones and in the breakdown of synthetic insecticides. This Drosophila melanogaster (Fruit fly) protein is Probable cytochrome P450 4d20 (Cyp4d20).